Consider the following 230-residue polypeptide: Large ribosomal subunit protein uL1 (230 aa).

It belongs to the universal ribosomal protein uL1 family. In terms of assembly, part of the 50S ribosomal subunit.

In terms of biological role, binds directly to 23S rRNA. The L1 stalk is quite mobile in the ribosome, and is involved in E site tRNA release. Protein L1 is also a translational repressor protein, it controls the translation of the L11 operon by binding to its mRNA. The protein is Large ribosomal subunit protein uL1 of Thermoanaerobacter sp. (strain X514).